The following is a 118-amino-acid chain: UPF0329 protein ECU03_0030/ECU05_0040/ECU06_0010/ECU06_1710/ECU11_0010 (118 aa).

It belongs to the UPF0329 family.

This is UPF0329 protein ECU03_0030/ECU05_0040/ECU06_0010/ECU06_1710/ECU11_0010 from Encephalitozoon cuniculi (strain GB-M1) (Microsporidian parasite).